A 35-amino-acid chain; its full sequence is Augerpeptide hheTx5 (35 aa).

Post-translationally, contains 4 disulfide bonds. In terms of tissue distribution, expressed by the venom duct.

It localises to the secreted. The sequence is that of Augerpeptide hheTx5 from Hastula hectica (Sea snail).